We begin with the raw amino-acid sequence, 410 residues long: Histidine--tRNA ligase (410 aa).

The protein belongs to the class-II aminoacyl-tRNA synthetase family.

Its subcellular location is the cytoplasm. It carries out the reaction tRNA(His) + L-histidine + ATP = L-histidyl-tRNA(His) + AMP + diphosphate + H(+). In Methanocorpusculum labreanum (strain ATCC 43576 / DSM 4855 / Z), this protein is Histidine--tRNA ligase.